Reading from the N-terminus, the 460-residue chain is Lipase member I (460 aa).

Positions 1 to 15 (MRVYIFLCLMCWVRS) are cleaved as a signal peptide. Asparagine 63 carries an N-linked (GlcNAc...) asparagine glycan. The Nucleophile role is filled by serine 159. Residue aspartate 183 is the Charge relay system of the active site. Cysteine 238 and cysteine 251 are disulfide-bonded. The active-site Charge relay system is the histidine 253. 2 cysteine pairs are disulfide-bonded: cysteine 275–cysteine 286 and cysteine 289–cysteine 297. Asparagine 396 carries an N-linked (GlcNAc...) asparagine glycan. Cysteine 436 and cysteine 455 form a disulfide bridge.

It belongs to the AB hydrolase superfamily. Lipase family. Interacts with heparin with a high affinity. Expressed in testis. Expressed exclusively at the connecting piece of the sperm.

Its subcellular location is the cell membrane. The protein resides in the secreted. It carries out the reaction 1-hexadecanoyl-2-(9Z-octadecenoyl)-sn-glycero-3-phosphate + H2O = 2-(9Z-octadecenoyl)-sn-glycero-3-phosphate + hexadecanoate + H(+). Its activity is regulated as follows. Inhibited by sodium vanadate. In terms of biological role, hydrolyzes specifically phosphatidic acid (PA) to produce 2-acyl lysophosphatidic acid (LPA; a potent bioactive lipid mediator) and fatty acid. Does not hydrolyze other phospholipids, like phosphatidylserine (PS), phosphatidylcholine (PC) and phosphatidylethanolamine (PE) or triacylglycerol (TG). The protein is Lipase member I (LIPI) of Homo sapiens (Human).